We begin with the raw amino-acid sequence, 141 residues long: Large ribosomal subunit protein uL16 (141 aa).

Belongs to the universal ribosomal protein uL16 family. Part of the 50S ribosomal subunit.

Its function is as follows. Binds 23S rRNA and is also seen to make contacts with the A and possibly P site tRNAs. This chain is Large ribosomal subunit protein uL16, found in Thermus thermophilus (strain ATCC BAA-163 / DSM 7039 / HB27).